The sequence spans 316 residues: Na(+)-translocating NADH-quinone reductase subunit C (316 aa).

Residues 13–33 (WYIILFIFVLSLIAGTLLSSV) form a helical membrane-spanning segment. Position 280 is an FMN phosphoryl threonine (Thr280).

It belongs to the NqrC family. As to quaternary structure, composed of six subunits; NqrA, NqrB, NqrC, NqrD, NqrE and NqrF. It depends on FMN as a cofactor.

It localises to the cell inner membrane. The catalysed reaction is a ubiquinone + n Na(+)(in) + NADH + H(+) = a ubiquinol + n Na(+)(out) + NAD(+). Functionally, NQR complex catalyzes the reduction of ubiquinone-1 to ubiquinol by two successive reactions, coupled with the transport of Na(+) ions from the cytoplasm to the periplasm. NqrA to NqrE are probably involved in the second step, the conversion of ubisemiquinone to ubiquinol. The protein is Na(+)-translocating NADH-quinone reductase subunit C of Chlamydia trachomatis serovar D (strain ATCC VR-885 / DSM 19411 / UW-3/Cx).